The following is a 485-amino-acid chain: Glutamate--tRNA ligase 2 (485 aa).

Residues Pro-10 to Asn-20 carry the 'HIGH' region motif. A 'KMSKS' region motif is present at residues Lys-252–Arg-256. Lys-255 serves as a coordination point for ATP.

Belongs to the class-I aminoacyl-tRNA synthetase family. Glutamate--tRNA ligase type 1 subfamily. As to quaternary structure, monomer.

The protein resides in the cytoplasm. It catalyses the reaction tRNA(Glu) + L-glutamate + ATP = L-glutamyl-tRNA(Glu) + AMP + diphosphate. Catalyzes the attachment of glutamate to tRNA(Glu) in a two-step reaction: glutamate is first activated by ATP to form Glu-AMP and then transferred to the acceptor end of tRNA(Glu). The chain is Glutamate--tRNA ligase 2 from Caldanaerobacter subterraneus subsp. tengcongensis (strain DSM 15242 / JCM 11007 / NBRC 100824 / MB4) (Thermoanaerobacter tengcongensis).